The chain runs to 174 residues: Granulocyte colony-stimulating factor (174 aa).

Intrachain disulfides connect cysteine 36-cysteine 42 and cysteine 64-cysteine 74. An O-linked (GalNAc...) threonine glycan is attached at threonine 133.

Belongs to the IL-6 superfamily. As to quaternary structure, monomer. In terms of processing, O-glycosylated.

The protein resides in the secreted. In terms of biological role, granulocyte/macrophage colony-stimulating factors are cytokines that act in hematopoiesis by controlling the production, differentiation, and function of 2 related white cell populations of the blood, the granulocytes and the monocytes-macrophages. This CSF induces granulocytes. The polypeptide is Granulocyte colony-stimulating factor (CSF3) (Ovis aries (Sheep)).